The chain runs to 601 residues: MSSDSMRNIRNFSIIAHVDHGKSTLADRIIQLCGGLQAREMEAQVLDSNPIERERGITIKAQSVSLPYTAKDGQTYFLNFIDTPGHVDFSYEVSRSLAACEGALLVVDAAQGVEAQSVANCYTAVEQGLEVVPVLNKIDLPTADIERAKAEIEAVIGIDAEDAVAVSAKTGLNIDLVLEAIVHRIPPPKPRDTDKLQALIIDSWFDNYLGVVSLVRVMQGEIKPGSKIQVMSTGRTHLVDKVGVFTPKRKELVALGAGEVGWINASIKDVHGAPVGDTLTLAADPAPHALPGFQEMQPRVFAGLFPVDAEDYPDLREALDKLRLNDAALRFEPESSEAMGFGFRCGFLGMLHMEIVQERLEREYNLNLISTAPTVVYEVLKTDGTIIPMDNPSKLPPLNHVEEIREPIIRANILTPPDYVGNIITLCEEKRGSQIGINYLGSQVQISYELPMAEVVLDFFDKLKSVSRGYASLDYHFLRFQVGPFVRVDTLINGDKVDALSIIVHRSYADRRGRELCEKMKELIPRQMFDVAIQAAVGSQIISRSTVKAMRKNVLAKCYGGDVSRKKKLLEKQKEGKKRMKQVGRVEIPQEAFLAVLQMDK.

One can recognise a tr-type G domain in the interval 7–189; the sequence is RNIRNFSIIA…AIVHRIPPPK (183 aa). Residues 19–24 and 136–139 contribute to the GTP site; these read DHGKST and NKID.

The protein belongs to the TRAFAC class translation factor GTPase superfamily. Classic translation factor GTPase family. LepA subfamily.

Its subcellular location is the cell inner membrane. It carries out the reaction GTP + H2O = GDP + phosphate + H(+). Functionally, required for accurate and efficient protein synthesis under certain stress conditions. May act as a fidelity factor of the translation reaction, by catalyzing a one-codon backward translocation of tRNAs on improperly translocated ribosomes. Back-translocation proceeds from a post-translocation (POST) complex to a pre-translocation (PRE) complex, thus giving elongation factor G a second chance to translocate the tRNAs correctly. Binds to ribosomes in a GTP-dependent manner. The protein is Elongation factor 4 of Xanthomonas campestris pv. campestris (strain ATCC 33913 / DSM 3586 / NCPPB 528 / LMG 568 / P 25).